The primary structure comprises 349 residues: MSSRNAPSGCVAPSPATAAPPSPTNLRLTVGQSGSESANEPGGEPEERILQDGFWEYGRFYGNWKKGKYNFPIDKEETSRLDILHKYFIVETEDRVTSVPLDKEGSPKIMDLGTGTGIWAFHVVEGYIPNAQIMAVDLNQIQPALIPRGVTTKQFDLEEPSWEPLLRDCDLIHLRLLYGSIRDDLWADTYRKIFEHLAPGGYVEHLEIDWTPQWDGEDHPTHSAIREWSQQFHRAMHRYRRSVKVSSEDTKRMMEAAGFTEFKETKIRCYLNPWSTDRHQREAARWFNLALGLGLEAMSLMPMIDMLHMKQEDVVDLCKRVKAETCVLRYHAYFTLHTWTAKKPASPPQ.

The interval 1–46 (MSSRNAPSGCVAPSPATAAPPSPTNLRLTVGQSGSESANEPGGEPE) is disordered. Polar residues predominate over residues 25–38 (NLRLTVGQSGSESA).

The protein belongs to the methyltransferase superfamily. LaeA methyltransferase family. In terms of assembly, component of the heterotrimeric velvet complex composed of LAE1, VEL1 and VEL2; VEL1 acting as a bridging protein between LAE1 and VEL2.

The protein resides in the nucleus. The enzyme catalyses L-methionyl-[protein] + S-adenosyl-L-methionine = S-methyl-L-methionyl-[protein] + S-adenosyl-L-homocysteine. Functionally, methyltransferase that performs automethylation. No other methyl-accepting substrate has been identified yet. Component of the velvet transcription factor complex that acts as a global regulator for secondary metabolite gene expression. Controls the expression of the gamma-pentyl-pyrone gene clusters. Required for the expression of cellulase. Regulates asexual sporulation (conidiation) by environmental stimuli such as light and/or mechanical injury. Required for oxidative stress tolerance. Also plays a role in defense and parasitism on other fungi. This is Secondary metabolism regulator LAE1 from Hypocrea atroviridis (strain ATCC 20476 / IMI 206040) (Trichoderma atroviride).